The following is a 514-amino-acid chain: 2,3-bisphosphoglycerate-independent phosphoglycerate mutase (514 aa).

Asp14 and Ser64 together coordinate Mn(2+). Catalysis depends on Ser64, which acts as the Phosphoserine intermediate. Residues His125, 155-156, Arg187, Arg193, 263-266, and Lys336 each bind substrate; these read RD and RADR. Asp403, His407, Asp444, His445, and His463 together coordinate Mn(2+).

This sequence belongs to the BPG-independent phosphoglycerate mutase family. As to quaternary structure, monomer. Mn(2+) is required as a cofactor.

The catalysed reaction is (2R)-2-phosphoglycerate = (2R)-3-phosphoglycerate. The protein operates within carbohydrate degradation; glycolysis; pyruvate from D-glyceraldehyde 3-phosphate: step 3/5. In terms of biological role, catalyzes the interconversion of 2-phosphoglycerate and 3-phosphoglycerate. In Shewanella putrefaciens (strain CN-32 / ATCC BAA-453), this protein is 2,3-bisphosphoglycerate-independent phosphoglycerate mutase.